Consider the following 115-residue polypeptide: Replication initiation control protein YabA (115 aa).

Residues His-86, Cys-88, Cys-102, and Cys-105 each contribute to the Zn(2+) site.

The protein belongs to the YabA family. Homotetramer. Interacts with both DnaA and DnaN, acting as a bridge between these two proteins. Zn(2+) is required as a cofactor.

The protein localises to the cytoplasm. The protein resides in the nucleoid. Involved in control of chromosome replication initiation. Inhibits the cooperative binding of DnaA to the oriC region, thus negatively regulating initiation of chromosome replication. Inhibits the ability of DnaA-ATP to form a helix on DNA; does not disassemble preformed DnaA-DNA helices. Decreases the residence time of DnaA on the chromosome at its binding sites (oriC, replication forks and promoter-binding sites). Tethers DnaA to the replication machinery via the DNA polymerase beta sliding clamp subunit (dnaN). Associates with oriC and other DnaA targets on the chromosome in a DnaA-dependent manner. The protein is Replication initiation control protein YabA of Enterococcus faecalis (strain ATCC 700802 / V583).